The sequence spans 327 residues: GMP reductase (327 aa).

Cys-176 acts as the Thioimidate intermediate in catalysis. NADP(+) is bound at residue Ile-205–Val-228.

The protein belongs to the IMPDH/GMPR family. GuaC type 2 subfamily.

The catalysed reaction is IMP + NH4(+) + NADP(+) = GMP + NADPH + 2 H(+). In terms of biological role, catalyzes the irreversible NADPH-dependent deamination of GMP to IMP. It functions in the conversion of nucleobase, nucleoside and nucleotide derivatives of G to A nucleotides, and in maintaining the intracellular balance of A and G nucleotides. In Streptococcus suis (strain 98HAH33), this protein is GMP reductase.